The chain runs to 695 residues: uncharacterized protein (695 aa).

This is an uncharacterized protein from Xanthomonas campestris pv. campestris (strain ATCC 33913 / DSM 3586 / NCPPB 528 / LMG 568 / P 25).